The primary structure comprises 646 residues: UvrABC system protein B (646 aa).

The region spanning 25-412 (NGIKAGMREQ…QNIVEQIIRP (388 aa)) is the Helicase ATP-binding domain. 38–45 (GVTGSGKT) contributes to the ATP binding site. The Beta-hairpin signature appears at 91–114 (YYDFYQPEAYIPQTDTYIDKEASI). Residues 428 to 594 (QVDDLLSEIR…STRRTLREEE (167 aa)) enclose the Helicase C-terminal domain. Residues 611 to 646 (ELIIKDLEAEMRDAARNLEFERAARIRDRIMSLKSN) enclose the UVR domain.

The protein belongs to the UvrB family. In terms of assembly, forms a heterotetramer with UvrA during the search for lesions. Interacts with UvrC in an incision complex.

The protein localises to the cytoplasm. In terms of biological role, the UvrABC repair system catalyzes the recognition and processing of DNA lesions. A damage recognition complex composed of 2 UvrA and 2 UvrB subunits scans DNA for abnormalities. Upon binding of the UvrA(2)B(2) complex to a putative damaged site, the DNA wraps around one UvrB monomer. DNA wrap is dependent on ATP binding by UvrB and probably causes local melting of the DNA helix, facilitating insertion of UvrB beta-hairpin between the DNA strands. Then UvrB probes one DNA strand for the presence of a lesion. If a lesion is found the UvrA subunits dissociate and the UvrB-DNA preincision complex is formed. This complex is subsequently bound by UvrC and the second UvrB is released. If no lesion is found, the DNA wraps around the other UvrB subunit that will check the other stand for damage. The protein is UvrABC system protein B of Methanothermobacter thermautotrophicus (strain ATCC 29096 / DSM 1053 / JCM 10044 / NBRC 100330 / Delta H) (Methanobacterium thermoautotrophicum).